Reading from the N-terminus, the 159-residue chain is Cyanate hydratase (159 aa).

Active-site residues include Arg103, Glu106, and Ser129.

Belongs to the cyanase family.

It catalyses the reaction cyanate + hydrogencarbonate + 3 H(+) = NH4(+) + 2 CO2. Catalyzes the reaction of cyanate with bicarbonate to produce ammonia and carbon dioxide. This is Cyanate hydratase from Blastomyces gilchristii (strain SLH14081) (Blastomyces dermatitidis).